A 353-amino-acid chain; its full sequence is Fe(3+) ions import ATP-binding protein FbpC (353 aa).

Residues 9 to 239 (VTFQNVRKSF…PASSFIADFM (231 aa)) enclose the ABC transporter domain. ATP is bound at residue 41–48 (GPSGCGKT).

The protein belongs to the ABC transporter superfamily. Fe(3+) ion importer (TC 3.A.1.10) family. The complex is composed of two ATP-binding proteins (FbpC), two transmembrane proteins (FbpB) and a solute-binding protein (FbpA).

The protein localises to the cell inner membrane. The enzyme catalyses Fe(3+)(out) + ATP + H2O = Fe(3+)(in) + ADP + phosphate + H(+). Part of the ABC transporter complex FbpABC involved in Fe(3+) ions import. Responsible for energy coupling to the transport system. The polypeptide is Fe(3+) ions import ATP-binding protein FbpC (Rhizobium etli (strain ATCC 51251 / DSM 11541 / JCM 21823 / NBRC 15573 / CFN 42)).